Consider the following 284-residue polypeptide: UPF0761 membrane protein IL2447 (284 aa).

6 helical membrane-spanning segments follow: residues 41 to 61, 98 to 118, 137 to 157, 178 to 198, 214 to 234, and 247 to 267; these read MLSL…FPMF, MTAI…SAID, FAVY…GLAA, FVLW…MYQL, VIAA…ITFF, and IPIL…GAVL.

This sequence belongs to the UPF0761 family.

Its subcellular location is the cell inner membrane. This chain is UPF0761 membrane protein IL2447, found in Idiomarina loihiensis (strain ATCC BAA-735 / DSM 15497 / L2-TR).